A 145-amino-acid chain; its full sequence is Large ribosomal subunit protein uL11 (145 aa).

The protein belongs to the universal ribosomal protein uL11 family. As to quaternary structure, part of the ribosomal stalk of the 50S ribosomal subunit. Interacts with L10 and the large rRNA to form the base of the stalk. L10 forms an elongated spine to which L12 dimers bind in a sequential fashion forming a multimeric L10(L12)X complex. In terms of processing, one or more lysine residues are methylated.

Forms part of the ribosomal stalk which helps the ribosome interact with GTP-bound translation factors. This is Large ribosomal subunit protein uL11 from Rickettsia canadensis (strain McKiel).